A 962-amino-acid polypeptide reads, in one-letter code: Villin-5 (962 aa).

Gelsolin-like repeat units lie at residues 29-79 (FKPV…DEAG), 150-190 (VRVK…QERA), 262-305 (GQTD…DQRK), 396-453 (LQVW…EDRA), 534-574 (MQAI…EDQE), and 636-677 (LKAT…KKKP). The interval 749–785 (KPKRRVPAYSSRSTVPDKSQPRSRSMTFSPDRARVRG) is disordered. The segment covering 758 to 776 (SSRSTVPDKSQPRSRSMTF) has biased composition (polar residues). Serine 777 and serine 787 each carry phosphoserine. Residues 845-862 (EKPTPTSQEPPTSPSSSE) are compositionally biased toward low complexity. Residues 845–917 (EKPTPTSQEP…LKTDSEDPVS (73 aa)) are disordered. Residues 863 to 875 (ATNQAEAPKSTSE) show a composition bias toward polar residues. Serine 883 bears the Phosphoserine mark. Residues 889 to 898 (SKEEEAEEES) show a composition bias toward acidic residues. An HP domain is found at 897-962 (ESSLPTFPYE…NKLKMSVNLF (66 aa)).

This sequence belongs to the villin/gelsolin family. Ubiquitous, but expressed preferentially in pollen and stamens.

It is found in the cytoplasm. It localises to the cytoskeleton. Functionally, major actin filament stabilizing factor and regulator of actin dynamics. Binds actin and actin filament bundles in a Ca(2+)-insensitive manner, but caps the barbed end of actin filaments and is able to sever them in a calcium-dependent manner. Required for the construction of actin collars in pollen tubes. Acts synergistically with VLN2 (AC O81644) to regulate polarized pollen tube growth. The sequence is that of Villin-5 from Arabidopsis thaliana (Mouse-ear cress).